Consider the following 79-residue polypeptide: Acyl carrier protein (79 aa).

Residues 2–77 form the Carrier domain; that stretch reads SDIEARVKKI…NAIDYANTHH (76 aa). Position 37 is an O-(pantetheine 4'-phosphoryl)serine (Ser-37).

The protein belongs to the acyl carrier protein (ACP) family. Post-translationally, 4'-phosphopantetheine is transferred from CoA to a specific serine of apo-ACP by AcpS. This modification is essential for activity because fatty acids are bound in thioester linkage to the sulfhydryl of the prosthetic group.

The protein localises to the cytoplasm. The protein operates within lipid metabolism; fatty acid biosynthesis. Its function is as follows. Carrier of the growing fatty acid chain in fatty acid biosynthesis. This Polaromonas naphthalenivorans (strain CJ2) protein is Acyl carrier protein.